Reading from the N-terminus, the 406-residue chain is Phosphopentomutase (406 aa).

Residues D10, D305, H310, D346, H347, and H358 each coordinate Mn(2+).

Belongs to the phosphopentomutase family. Requires Mn(2+) as cofactor.

It is found in the cytoplasm. The enzyme catalyses 2-deoxy-alpha-D-ribose 1-phosphate = 2-deoxy-D-ribose 5-phosphate. It carries out the reaction alpha-D-ribose 1-phosphate = D-ribose 5-phosphate. It functions in the pathway carbohydrate degradation; 2-deoxy-D-ribose 1-phosphate degradation; D-glyceraldehyde 3-phosphate and acetaldehyde from 2-deoxy-alpha-D-ribose 1-phosphate: step 1/2. Isomerase that catalyzes the conversion of deoxy-ribose 1-phosphate (dRib-1-P) and ribose 1-phosphate (Rib-1-P) to deoxy-ribose 5-phosphate (dRib-5-P) and ribose 5-phosphate (Rib-5-P), respectively. The polypeptide is Phosphopentomutase (Rhizobium rhizogenes (strain K84 / ATCC BAA-868) (Agrobacterium radiobacter)).